Reading from the N-terminus, the 195-residue chain is 7-methyl-GTP pyrophosphatase (195 aa).

The Proton acceptor role is filled by Asp-70.

Belongs to the Maf family. YceF subfamily. It depends on a divalent metal cation as a cofactor.

The protein resides in the cytoplasm. It carries out the reaction N(7)-methyl-GTP + H2O = N(7)-methyl-GMP + diphosphate + H(+). Nucleoside triphosphate pyrophosphatase that hydrolyzes 7-methyl-GTP (m(7)GTP). May have a dual role in cell division arrest and in preventing the incorporation of modified nucleotides into cellular nucleic acids. The polypeptide is 7-methyl-GTP pyrophosphatase (Shewanella sp. (strain MR-7)).